The primary structure comprises 387 residues: Putative transposase y4pF/y4sB (387 aa).

Belongs to the transposase 20 family.

The chain is Putative transposase y4pF/y4sB from Sinorhizobium fredii (strain NBRC 101917 / NGR234).